The following is a 248-amino-acid chain: Adenylate kinase (248 aa).

An ATP-binding site is contributed by glycine 37 to threonine 42. The tract at residues serine 57 to valine 86 is NMP. AMP-binding positions include arginine 63, glutamine 84–valine 86, glycine 111–arginine 114, and glutamine 118. Positions glycine 149–aspartate 181 are LID. Arginine 150 contributes to the ATP binding site. 2 residues coordinate AMP: arginine 178 and arginine 189.

It belongs to the adenylate kinase family. In terms of assembly, monomer.

It is found in the cytoplasm. The catalysed reaction is AMP + ATP = 2 ADP. Its function is as follows. Catalyzes the reversible transfer of the terminal phosphate group between ATP and AMP. Plays an important role in cellular energy homeostasis and in adenine nucleotide metabolism. The polypeptide is Adenylate kinase (Giardia intestinalis (Giardia lamblia)).